The sequence spans 159 residues: 2-C-methyl-D-erythritol 2,4-cyclodiphosphate synthase (159 aa).

Residues D8 and H10 each contribute to the a divalent metal cation site. 4-CDP-2-C-methyl-D-erythritol 2-phosphate-binding positions include 8–10 (DVH) and 34–35 (HS). H42 is a binding site for a divalent metal cation. 4-CDP-2-C-methyl-D-erythritol 2-phosphate contacts are provided by residues 56–58 (DIG), 61–65 (FPDTD), 100–106 (AQAPKML), 132–135 (TTTE), F139, and R142.

The protein belongs to the IspF family. In terms of assembly, homotrimer. A divalent metal cation serves as cofactor.

It carries out the reaction 4-CDP-2-C-methyl-D-erythritol 2-phosphate = 2-C-methyl-D-erythritol 2,4-cyclic diphosphate + CMP. Its pathway is isoprenoid biosynthesis; isopentenyl diphosphate biosynthesis via DXP pathway; isopentenyl diphosphate from 1-deoxy-D-xylulose 5-phosphate: step 4/6. Involved in the biosynthesis of isopentenyl diphosphate (IPP) and dimethylallyl diphosphate (DMAPP), two major building blocks of isoprenoid compounds. Catalyzes the conversion of 4-diphosphocytidyl-2-C-methyl-D-erythritol 2-phosphate (CDP-ME2P) to 2-C-methyl-D-erythritol 2,4-cyclodiphosphate (ME-CPP) with a corresponding release of cytidine 5-monophosphate (CMP). This is 2-C-methyl-D-erythritol 2,4-cyclodiphosphate synthase from Salmonella dublin (strain CT_02021853).